A 187-amino-acid chain; its full sequence is Elongation factor P (187 aa).

Belongs to the elongation factor P family.

Its subcellular location is the cytoplasm. It participates in protein biosynthesis; polypeptide chain elongation. In terms of biological role, involved in peptide bond synthesis. Stimulates efficient translation and peptide-bond synthesis on native or reconstituted 70S ribosomes in vitro. Probably functions indirectly by altering the affinity of the ribosome for aminoacyl-tRNA, thus increasing their reactivity as acceptors for peptidyl transferase. This is Elongation factor P from Fusobacterium nucleatum subsp. nucleatum (strain ATCC 25586 / DSM 15643 / BCRC 10681 / CIP 101130 / JCM 8532 / KCTC 2640 / LMG 13131 / VPI 4355).